We begin with the raw amino-acid sequence, 642 residues long: MDKKKDLLENEQFLRIQKLNAADAGKRQSITVDDEGELYGLDTSGNSPANEHTATTITQNHSVVASNGDVAFIPGTATEGNTEIVTEEVIETDDNMFKTHVKTLSSKEKARYRQGSSNFISYFDDMSFEHRPSILDGSVNEPFKTKFVGPTLEKEIRRREKELMAMRKNLHHRKSSPDAVDSVGKNDGAAPTTVPTAATSETVVTVETTIISSNFSGLYVAFWMAIAFGAVKALIDYYYQHNGSFKDSEILKFMTTNLFTVASVDLLMYLSTYFVVGIQYLCKWGVLKWGTTGWIFTSIYEFLFVIFYMYLTENILKLHWLSKIFLFLHSLVLLMKMHSFAFYNGYLWGIKEELQFSKSALAKYKDSINDPKVIGALEKSCEFCSFELSSQSLSDQTQKFPNNISAKSFFWFTMFPTLIYQIEYPRTKEIRWSYVLEKICAIFGTIFLMMIDAQILMYPVAMRALAVRNSEWTGILDRLLKWVGLLVDIVPGFIVMYILDFYLIWDAILNCVAELTRFGDRYFYGDWWNCVSWADFSRIWNIPVHKFLLRHVYHSSMSSFKLNKSQATLMTFFLSSVVHELAMYVIFKKLRFYLFFFQMLQMPLVALTNTKFMRNRTIIGNVIFWLGICMGPSVMCTLYLTF.

The tract at residues 174-194 (KSSPDAVDSVGKNDGAAPTTV) is disordered. Residues Ser175 and Ser176 each carry the phosphoserine modification. Transmembrane regions (helical) follow at residues 215 to 235 (FSGLYVAFWMAIAFGAVKALI), 292 to 312 (TGWIFTSIYEFLFVIFYMYLT), 404 to 424 (ISAKSFFWFTMFPTLIYQIEY), 442 to 462 (IFGTIFLMMIDAQILMYPVAM), and 485 to 505 (LLVDIVPGFIVMYILDFYLIW). Residues 523–529 (FYGDWWN) carry the FYXDWWN motif motif. The next 2 helical transmembrane spans lie at 567–587 (ATLMTFFLSSVVHELAMYVIF) and 622–642 (VIFWLGICMGPSVMCTLYLTF). His579 is an active-site residue.

This sequence belongs to the membrane-bound acyltransferase family. Sterol o-acyltransferase subfamily.

It localises to the endoplasmic reticulum membrane. It carries out the reaction ergosterol + an acyl-CoA = ergosteryl ester + CoA. It catalyses the reaction zymosterol + an acyl-CoA = zymosterol ester + CoA. In terms of biological role, sterol O-acyltransferase that catalyzes the formation of stery esters. This is Sterol O-acyltransferase 2 from Saccharomyces cerevisiae (strain ATCC 204508 / S288c) (Baker's yeast).